The chain runs to 170 residues: Adenine phosphoribosyltransferase (170 aa).

Belongs to the purine/pyrimidine phosphoribosyltransferase family. As to quaternary structure, homodimer.

It is found in the cytoplasm. The enzyme catalyses AMP + diphosphate = 5-phospho-alpha-D-ribose 1-diphosphate + adenine. It participates in purine metabolism; AMP biosynthesis via salvage pathway; AMP from adenine: step 1/1. Its function is as follows. Catalyzes a salvage reaction resulting in the formation of AMP, that is energically less costly than de novo synthesis. The polypeptide is Adenine phosphoribosyltransferase (Lysinibacillus sphaericus (strain C3-41)).